We begin with the raw amino-acid sequence, 47 residues long: Putative heat shock protein HSP90 (47 aa).

Residue arginine 47 participates in ATP binding.

This sequence belongs to the heat shock protein 90 family. Homodimer.

It is found in the cytoplasm. Its function is as follows. Putative molecular chaperone that may promote the maturation, structural maintenance and proper regulation of specific target proteins. The protein is Putative heat shock protein HSP90 of Populus euphratica (Euphrates poplar).